The primary structure comprises 563 residues: Cysteine--tRNA ligase, chloroplastic/mitochondrial (563 aa).

A Zn(2+)-binding site is contributed by Cys91. Gly92 provides a ligand contact to L-cysteine. The short motif at Val93–His103 is the 'HIGH' region element. Residue Thr131 participates in L-cysteine binding. A 'KIIK' region motif is present at residues Lys136–Ala139. 3 residues coordinate Zn(2+): Cys271, His296, and Glu300. His296 serves as a coordination point for L-cysteine. A 'KMSKS' region motif is present at residues Lys328 to Ser332. Lys331 contributes to the ATP binding site.

This sequence belongs to the class-I aminoacyl-tRNA synthetase family. Requires Zn(2+) as cofactor.

It is found in the plastid. It localises to the chloroplast. Its subcellular location is the mitochondrion. The enzyme catalyses tRNA(Cys) + L-cysteine + ATP = L-cysteinyl-tRNA(Cys) + AMP + diphosphate. Its function is as follows. Required for female gametophyte development. Is necessary for the fusion of central cell nuclei and programmed cell death (PCD) of the antipodals. The protein is Cysteine--tRNA ligase, chloroplastic/mitochondrial of Arabidopsis thaliana (Mouse-ear cress).